Here is a 338-residue protein sequence, read N- to C-terminus: Glycerol-3-phosphate dehydrogenase [NAD(P)+] (338 aa).

The NADPH site is built by S12, W13, R33, and K110. Positions 110, 141, and 143 each coordinate sn-glycerol 3-phosphate. A145 contributes to the NADPH binding site. Residues K196, D249, S259, R260, and N261 each contribute to the sn-glycerol 3-phosphate site. Residue K196 is the Proton acceptor of the active site. R260 lines the NADPH pocket. V284 and E286 together coordinate NADPH.

Belongs to the NAD-dependent glycerol-3-phosphate dehydrogenase family.

It is found in the cytoplasm. The catalysed reaction is sn-glycerol 3-phosphate + NAD(+) = dihydroxyacetone phosphate + NADH + H(+). It catalyses the reaction sn-glycerol 3-phosphate + NADP(+) = dihydroxyacetone phosphate + NADPH + H(+). It participates in membrane lipid metabolism; glycerophospholipid metabolism. Functionally, catalyzes the reduction of the glycolytic intermediate dihydroxyacetone phosphate (DHAP) to sn-glycerol 3-phosphate (G3P), the key precursor for phospholipid synthesis. This Limosilactobacillus reuteri (strain DSM 20016) (Lactobacillus reuteri) protein is Glycerol-3-phosphate dehydrogenase [NAD(P)+].